The primary structure comprises 215 residues: Triosephosphate isomerase (215 aa).

His-82 acts as the Electrophile in catalysis. The Proton acceptor role is filled by Glu-153.

It belongs to the triosephosphate isomerase family. In terms of assembly, homodimer.

The catalysed reaction is D-glyceraldehyde 3-phosphate = dihydroxyacetone phosphate. Its pathway is carbohydrate biosynthesis; gluconeogenesis. It participates in carbohydrate degradation; glycolysis; D-glyceraldehyde 3-phosphate from glycerone phosphate: step 1/1. In Heliothis virescens (Tobacco budworm moth), this protein is Triosephosphate isomerase (Tpi).